A 623-amino-acid polypeptide reads, in one-letter code: E3 ubiquitin-protein ligase ORTHRUS 5 (623 aa).

The PHD-type zinc finger occupies 12–62 (DGVCMRCQVNPPSEETLTCGTCVTPWHVSCLLPESLASSTGDWECPDCSGV). The RING-type 1 zinc finger occupies 129-169 (CSICIQLPERPVTTPCGHNFCLKCFEKWAVGQGKLTCMICR). A YDG domain is found at 258 to 407 (TRNQGVLVGE…HKMCRYLFVR (150 aa)). The RING-type 2 zinc-finger motif lies at 498–555 (CQICRKVLSLPVTTPCAHNFCKACLEAKFAGITQLRDRSNGVRKLRAKKNIMTCPCCT). The tract at residues 580 to 623 (KSEEEAEVAESSNISEEEGEEESEPPTKKIKMDKNSVGGTSLSA) is disordered. Positions 594 to 603 (SEEEGEEESE) are enriched in acidic residues. Residues 604–613 (PPTKKIKMDK) are compositionally biased toward basic and acidic residues.

In terms of tissue distribution, expressed in inflorescences.

The protein resides in the nucleus. The enzyme catalyses S-ubiquitinyl-[E2 ubiquitin-conjugating enzyme]-L-cysteine + [acceptor protein]-L-lysine = [E2 ubiquitin-conjugating enzyme]-L-cysteine + N(6)-ubiquitinyl-[acceptor protein]-L-lysine.. It functions in the pathway protein modification; protein ubiquitination. E3 ubiquitin-protein ligase. Participates in CpG methylation-dependent transcriptional regulation and epigenetic transcriptional silencing. Mediates ubiquitination with the E2 ubiquitin-conjugating enzyme UBC11. The chain is E3 ubiquitin-protein ligase ORTHRUS 5 (ORTH5) from Arabidopsis thaliana (Mouse-ear cress).